Here is a 117-residue protein sequence, read N- to C-terminus: Immunoglobulin heavy variable 1-24 (117 aa).

The N-terminal stretch at 1-19 (MDCTWRILFLVAAATGTHA) is a signal peptide. Positions 20–44 (QVQLVQSGAEVKKPGASVKVSCKVS) are framework-1. Residues 20-117 (QVQLVQSGAE…EDTAVYYCAT (98 aa)) form the Ig-like domain. An intrachain disulfide couples cysteine 41 to cysteine 115. The tract at residues 45–52 (GYTLTELS) is complementarity-determining-1. The framework-2 stretch occupies residues 53–69 (MHWVRQAPGKGLEWMGG). The segment at 70-77 (FDPEDGET) is complementarity-determining-2. Residues 78 to 115 (IYAQKFQGRVTMTEDTSTDTAYMELSSLRSEDTAVYYC) form a framework-3 region. The tract at residues 116-117 (AT) is complementarity-determining-3.

As to quaternary structure, immunoglobulins are composed of two identical heavy chains and two identical light chains; disulfide-linked.

It localises to the secreted. Its subcellular location is the cell membrane. In terms of biological role, v region of the variable domain of immunoglobulin heavy chains that participates in the antigen recognition. Immunoglobulins, also known as antibodies, are membrane-bound or secreted glycoproteins produced by B lymphocytes. In the recognition phase of humoral immunity, the membrane-bound immunoglobulins serve as receptors which, upon binding of a specific antigen, trigger the clonal expansion and differentiation of B lymphocytes into immunoglobulins-secreting plasma cells. Secreted immunoglobulins mediate the effector phase of humoral immunity, which results in the elimination of bound antigens. The antigen binding site is formed by the variable domain of one heavy chain, together with that of its associated light chain. Thus, each immunoglobulin has two antigen binding sites with remarkable affinity for a particular antigen. The variable domains are assembled by a process called V-(D)-J rearrangement and can then be subjected to somatic hypermutations which, after exposure to antigen and selection, allow affinity maturation for a particular antigen. This chain is Immunoglobulin heavy variable 1-24, found in Homo sapiens (Human).